A 403-amino-acid polypeptide reads, in one-letter code: Nuclear receptor subfamily 2 group F member 5 (403 aa).

A disordered region spans residues 16 to 44; sequence PGSQLQMCSQEPGGTPGTPSGSTPGNDAL. Residues 51-126 constitute a DNA-binding region (nuclear receptor); the sequence is NVDCMVCGDK…VGMRREAVQR (76 aa). 2 NR C4-type zinc fingers span residues 54–74 and 90–114; these read CMVCGDKSSGKHYGQFTCEGC and CRGNRDCPIDQHHRNQCQYCRLKKC. Residues 152–378 form the NR LBD domain; that stretch reads YLSGFISLLL…TLLRDMLLSG (227 aa).

Belongs to the nuclear hormone receptor family. NR2 subfamily.

It is found in the nucleus. Putative receptor that is required in photoreceptor cells precursors during eye development. The protein is Nuclear receptor subfamily 2 group F member 5 (nr2f5) of Danio rerio (Zebrafish).